A 614-amino-acid polypeptide reads, in one-letter code: V-type proton ATPase catalytic subunit A (614 aa).

247–254 (GAFGCGKT) contributes to the ATP binding site.

The protein belongs to the ATPase alpha/beta chains family. In terms of assembly, V-ATPase is a heteromultimeric enzyme made up of two complexes: the ATP-hydrolytic V1 complex and the proton translocation V0 complex. The V1 complex consists of three catalytic AB heterodimers that form a heterohexamer, three peripheral stalks each consisting of EG heterodimers, one central rotor including subunits D and F, and the regulatory subunits C and H. The proton translocation complex V0 consists of the proton transport subunit a, a ring of proteolipid subunits c9c'', rotary subunit d, subunits e and f, and the accessory subunits VhaAC45 and ATP6AP2.

It catalyses the reaction ATP + H2O + 4 H(+)(in) = ADP + phosphate + 5 H(+)(out). With respect to regulation, ATP hydrolysis occurs at the interface between the nucleotide-binding domains of subunits A and B. ATP hydrolysis triggers a conformational change in the subunits D and F, which induces a shift of subunit d. The c-ring is subsequently rotated and results in a continuous proton translocation across the membrane. In terms of biological role, catalytic subunit of the V1 complex of vacuolar(H+)-ATPase (V-ATPase), a multisubunit enzyme composed of a peripheral complex (V1) that hydrolyzes ATP and a membrane integral complex (V0) that translocates protons. V-ATPase is responsible for acidifying and maintaining the pH of intracellular compartments and in some cell types, is targeted to the plasma membrane, where it is responsible for acidifying the extracellular environment. The polypeptide is V-type proton ATPase catalytic subunit A (VhaA) (Aedes aegypti (Yellowfever mosquito)).